The primary structure comprises 442 residues: 6-phospho-alpha-glucosidase 1 (442 aa).

6–72 (FSVLIAGGGS…PEVEFLATTD (67 aa)) is a binding site for NAD(+). Substrate is bound by residues Arg-95 and Asn-149. A Mn(2+)-binding site is contributed by Cys-171. Catalysis depends on Asp-172, which acts as the Proton donor. His-202 is a Mn(2+) binding site. The active-site Proton acceptor is the Tyr-265. Arg-285 serves as a coordination point for substrate.

The protein belongs to the glycosyl hydrolase 4 family. In terms of assembly, homodimer. May also form homotetramer. Mn(2+) serves as cofactor. Co(2+) is required as a cofactor. It depends on Ni(2+) as a cofactor. The cofactor is Fe(2+). Requires Mg(2+) as cofactor. NAD(+) serves as cofactor.

The catalysed reaction is alpha-maltose 6'-phosphate + H2O = D-glucose 6-phosphate + D-glucose. With respect to regulation, is inhibited by EDTA in vitro. In terms of biological role, is probably involved in the catabolism of alpha-glycosides accumulated via a phosphoenolpyruvate-dependent phosphotransferase system (PEP-PTS). Hydrolyzes a wide variety of 6-phospho-alpha-D-glucosides including the five isomeric derivatives of sucrose, i.e. trehalulose-6'-phosphate, turanose-6'-phosphate, maltulose-6'-phosphate, leucrose-6'-phosphate, and palatinose-6'-phosphate, but is not active on sucrose-6-phosphate. Can also hydrolyze maltose-6'-phosphate and methyl-alpha-glucose-6-phosphate, and poorly, trehalose-6-phosphate. Fails to hydrolyze beta-O-linked phosphorylated disaccharides such as cellobiose-6'-phosphate and gentiobiose-6'-phosphate. Does not seem to be involved in maltose catabolism. In Lacticaseibacillus paracasei (strain ATCC 334 / BCRC 17002 / CCUG 31169 / CIP 107868 / KCTC 3260 / NRRL B-441) (Lactobacillus paracasei), this protein is 6-phospho-alpha-glucosidase 1 (simA).